Reading from the N-terminus, the 292-residue chain is Large ribosomal subunit protein mL67 (292 aa).

Positions 59 to 83 (VELKSPSRLQLKSEPGNKGNPKGHG) are disordered.

Belongs to the mitochondrion-specific ribosomal protein mL67 family. Component of the mitochondrial large ribosomal subunit (mt-LSU). Mature N.crassa 74S mitochondrial ribosomes consist of a small (37S) and a large (54S) subunit. The 37S small subunit contains a 16S ribosomal RNA (16S mt-rRNA) and 32 different proteins. The 54S large subunit contains a 23S rRNA (23S mt-rRNA) and 42 different proteins.

Its subcellular location is the mitochondrion. Its function is as follows. Component of the mitochondrial ribosome (mitoribosome), a dedicated translation machinery responsible for the synthesis of mitochondrial genome-encoded proteins, including at least some of the essential transmembrane subunits of the mitochondrial respiratory chain. The mitoribosomes are attached to the mitochondrial inner membrane and translation products are cotranslationally integrated into the membrane. mL67/MHR1 also has extraribosomal functions, being involved in regulation of mitochondrial DNA recombination, maintenance and repair, and generation of homoplasmic cells. mL67/MHR1 also acts as a transcription factor involved in regulation of RNA polymerase II-dependent transcription. This chain is Large ribosomal subunit protein mL67 (mhr1), found in Neurospora crassa (strain ATCC 24698 / 74-OR23-1A / CBS 708.71 / DSM 1257 / FGSC 987).